Reading from the N-terminus, the 201-residue chain is ATP-dependent Clp protease proteolytic subunit 2 (201 aa).

Serine 101 (nucleophile) is an active-site residue. Histidine 126 is an active-site residue.

This sequence belongs to the peptidase S14 family. As to quaternary structure, fourteen ClpP subunits assemble into 2 heptameric rings which stack back to back to give a disk-like structure with a central cavity, resembling the structure of eukaryotic proteasomes.

It localises to the cytoplasm. The enzyme catalyses Hydrolysis of proteins to small peptides in the presence of ATP and magnesium. alpha-casein is the usual test substrate. In the absence of ATP, only oligopeptides shorter than five residues are hydrolyzed (such as succinyl-Leu-Tyr-|-NHMec, and Leu-Tyr-Leu-|-Tyr-Trp, in which cleavage of the -Tyr-|-Leu- and -Tyr-|-Trp bonds also occurs).. Functionally, cleaves peptides in various proteins in a process that requires ATP hydrolysis. Has a chymotrypsin-like activity. Plays a major role in the degradation of misfolded proteins. The chain is ATP-dependent Clp protease proteolytic subunit 2 from Prochlorococcus marinus subsp. pastoris (strain CCMP1986 / NIES-2087 / MED4).